The sequence spans 375 residues: Queuine tRNA-ribosyltransferase (375 aa).

D89 acts as the Proton acceptor in catalysis. Substrate-binding positions include 89 to 93 (DSGGF), D143, Q187, and G214. The segment at 245–251 (GVGKPED) is RNA binding. D264 functions as the Nucleophile in the catalytic mechanism. The segment at 269-273 (TRNAR) is RNA binding; important for wobble base 34 recognition. The Zn(2+) site is built by C302, C304, C307, and H333.

Belongs to the queuine tRNA-ribosyltransferase family. Homodimer. Within each dimer, one monomer is responsible for RNA recognition and catalysis, while the other monomer binds to the replacement base PreQ1. Requires Zn(2+) as cofactor.

The enzyme catalyses 7-aminomethyl-7-carbaguanine + guanosine(34) in tRNA = 7-aminomethyl-7-carbaguanosine(34) in tRNA + guanine. It functions in the pathway tRNA modification; tRNA-queuosine biosynthesis. Functionally, catalyzes the base-exchange of a guanine (G) residue with the queuine precursor 7-aminomethyl-7-deazaguanine (PreQ1) at position 34 (anticodon wobble position) in tRNAs with GU(N) anticodons (tRNA-Asp, -Asn, -His and -Tyr). Catalysis occurs through a double-displacement mechanism. The nucleophile active site attacks the C1' of nucleotide 34 to detach the guanine base from the RNA, forming a covalent enzyme-RNA intermediate. The proton acceptor active site deprotonates the incoming PreQ1, allowing a nucleophilic attack on the C1' of the ribose to form the product. After dissociation, two additional enzymatic reactions on the tRNA convert PreQ1 to queuine (Q), resulting in the hypermodified nucleoside queuosine (7-(((4,5-cis-dihydroxy-2-cyclopenten-1-yl)amino)methyl)-7-deazaguanosine). The polypeptide is Queuine tRNA-ribosyltransferase (Salmonella choleraesuis (strain SC-B67)).